Here is a 528-residue protein sequence, read N- to C-terminus: Glutamyl-tRNA(Gln) amidotransferase subunit A, mitochondrial (528 aa).

Lys76 serves as the catalytic Charge relay system. Residues 148–167 (YREKRKQNPHSENEDSDWLI) form a disordered region. The Charge relay system role is filled by Ser171. Catalysis depends on Ser195, which acts as the Acyl-ester intermediate.

Belongs to the amidase family. GatA subfamily. In terms of assembly, subunit of the heterotrimeric GatCAB amidotransferase (AdT) complex, composed of A (QRSL1), B (GATB) and C (GATC) subunits.

Its subcellular location is the mitochondrion. The enzyme catalyses L-glutamyl-tRNA(Gln) + L-glutamine + ATP + H2O = L-glutaminyl-tRNA(Gln) + L-glutamate + ADP + phosphate + H(+). Its function is as follows. Allows the formation of correctly charged Gln-tRNA(Gln) through the transamidation of misacylated Glu-tRNA(Gln) in the mitochondria. The reaction takes place in the presence of glutamine and ATP through an activated gamma-phospho-Glu-tRNA(Gln). The protein is Glutamyl-tRNA(Gln) amidotransferase subunit A, mitochondrial of Homo sapiens (Human).